Consider the following 219-residue polypeptide: Thiopurine S-methyltransferase (219 aa).

S-adenosyl-L-methionine is bound by residues Trp-10, Leu-45, Glu-66, and Arg-123.

This sequence belongs to the class I-like SAM-binding methyltransferase superfamily. TPMT family.

The protein localises to the cytoplasm. It catalyses the reaction S-adenosyl-L-methionine + a thiopurine = S-adenosyl-L-homocysteine + a thiopurine S-methylether.. The protein is Thiopurine S-methyltransferase of Shewanella frigidimarina (strain NCIMB 400).